The primary structure comprises 147 residues: MVHFTAEEKSTILSLWGKVNVEEAGGEALGRLLVVYPWTQRFFDSFGNLSSASAIMGNPKVKAHGKKVLTSFGEAVKNMDNLKGAFAKLSELHCDKLHVDPENFKLLGNVMVIILATHFGKEFTPDVQAAWQKLVSGVATALAHKYH.

One can recognise a Globin domain in the interval 3–147 (HFTAEEKSTI…VATALAHKYH (145 aa)). A phosphoserine mark is found at S14 and S51. Residues H64 and H93 each contribute to the heme b site.

Belongs to the globin family. In terms of assembly, heterotetramer of two alpha chains and two epsilon chains in early embryonic hemoglobin Gower-2; two zeta chains and two epsilon chains in early embryonic hemoglobin Gower-1. In terms of tissue distribution, red blood cells.

In terms of biological role, the epsilon chain is a beta-type chain of early mammalian embryonic hemoglobin. This Cheirogaleus medius (Fat-tailed dwarf lemur) protein is Hemoglobin subunit epsilon (HBE1).